Reading from the N-terminus, the 211-residue chain is Octanoyltransferase (211 aa).

The BPL/LPL catalytic domain maps to 32–207; it reads PCTYDEIWFV…ELSKFLEIFI (176 aa). Residues 71–78, 138–140, and 151–153 contribute to the substrate site; these read RGGQITYH, SLG, and GLA. C169 serves as the catalytic Acyl-thioester intermediate.

This sequence belongs to the LipB family.

The protein resides in the cytoplasm. The enzyme catalyses octanoyl-[ACP] + L-lysyl-[protein] = N(6)-octanoyl-L-lysyl-[protein] + holo-[ACP] + H(+). Its pathway is protein modification; protein lipoylation via endogenous pathway; protein N(6)-(lipoyl)lysine from octanoyl-[acyl-carrier-protein]: step 1/2. Its function is as follows. Catalyzes the transfer of endogenously produced octanoic acid from octanoyl-acyl-carrier-protein onto the lipoyl domains of lipoate-dependent enzymes. Lipoyl-ACP can also act as a substrate although octanoyl-ACP is likely to be the physiological substrate. The chain is Octanoyltransferase from Buchnera aphidicola subsp. Acyrthosiphon pisum (strain APS) (Acyrthosiphon pisum symbiotic bacterium).